A 193-amino-acid chain; its full sequence is Orotate phosphoribosyltransferase (193 aa).

Residue 114-122 (EDVITTGGS) coordinates 5-phospho-alpha-D-ribose 1-diphosphate. Residues Thr-118 and Arg-146 each coordinate orotate.

The protein belongs to the purine/pyrimidine phosphoribosyltransferase family. PyrE subfamily. Homodimer. Mg(2+) serves as cofactor.

The enzyme catalyses orotidine 5'-phosphate + diphosphate = orotate + 5-phospho-alpha-D-ribose 1-diphosphate. The protein operates within pyrimidine metabolism; UMP biosynthesis via de novo pathway; UMP from orotate: step 1/2. Its function is as follows. Catalyzes the transfer of a ribosyl phosphate group from 5-phosphoribose 1-diphosphate to orotate, leading to the formation of orotidine monophosphate (OMP). This Chlorobium phaeobacteroides (strain DSM 266 / SMG 266 / 2430) protein is Orotate phosphoribosyltransferase.